Reading from the N-terminus, the 486-residue chain is Pentatricopeptide repeat-containing protein At2g01860 (486 aa).

A disordered region spans residues 111–137; sequence QKPDKPSRVRPLPLPQPHKLRPLGLPT. 5 PPR repeats span residues 290–321, 327–361, 362–396, 397–431, and 432–466; these read DSSVYVKMILEIAKNPDKYHLVVALLEELKKR, SQQDCTSIMKICVKLGEFELVESLFDWFKASNREP, SVVMYTTMIHSRYSEQKYREAMSVVWEMEESNCLL, DLPAYRVVIKLFVALDDLGRAMRYYSKLKEAGFSP, and TYDIYRDMISVYTASGRLTKCKEICKEVEDAGLRL.

This sequence belongs to the PPR family. P subfamily.

The polypeptide is Pentatricopeptide repeat-containing protein At2g01860 (EMB975) (Arabidopsis thaliana (Mouse-ear cress)).